The primary structure comprises 256 residues: MTDQRKGSDAEPTTHFGFKNVPESQKAEKVAEVFHSVAAKYDLMNDVLSGGMHRLWKRFTIELSGVRTGNRVLDIAGGTGDLAAKFSKLVGPTGQVVLADINGSMLKVGRDRLLDKGVAGNIEFVQADAEKLPFPDNHFDCVTIAFGLRNVTHKEDAIRSMLRVLKPGGRLLVLEFSKPTNALMSKVYDTYSFAFMPLMGKLITNDAESYRYLAESIRMHPDQETLKSMMVEAGFDRVTYHNMTSGIVALHRGIKP.

S-adenosyl-L-methionine-binding positions include Thr79, Asp100, and 128 to 129; that span reads DA.

This sequence belongs to the class I-like SAM-binding methyltransferase superfamily. MenG/UbiE family.

It carries out the reaction a 2-demethylmenaquinol + S-adenosyl-L-methionine = a menaquinol + S-adenosyl-L-homocysteine + H(+). The catalysed reaction is a 2-methoxy-6-(all-trans-polyprenyl)benzene-1,4-diol + S-adenosyl-L-methionine = a 5-methoxy-2-methyl-3-(all-trans-polyprenyl)benzene-1,4-diol + S-adenosyl-L-homocysteine + H(+). The protein operates within quinol/quinone metabolism; menaquinone biosynthesis; menaquinol from 1,4-dihydroxy-2-naphthoate: step 2/2. Its pathway is cofactor biosynthesis; ubiquinone biosynthesis. Its function is as follows. Methyltransferase required for the conversion of demethylmenaquinol (DMKH2) to menaquinol (MKH2) and the conversion of 2-polyprenyl-6-methoxy-1,4-benzoquinol (DDMQH2) to 2-polyprenyl-3-methyl-6-methoxy-1,4-benzoquinol (DMQH2). The chain is Ubiquinone/menaquinone biosynthesis C-methyltransferase UbiE from Pseudomonas fluorescens (strain SBW25).